Reading from the N-terminus, the 361-residue chain is UPF0283 membrane protein mlr0776 (361 aa).

Positions 1–33 are disordered; sequence MTAPRKPAAFRIEPEAAPTQETPKARQAELSRK. Residues 23–32 are compositionally biased toward basic and acidic residues; sequence PKARQAELSR. The next 2 helical transmembrane spans lie at 73–93 and 108–128; these read LFGS…VGLW and LGWL…VILI.

The protein belongs to the UPF0283 family.

Its subcellular location is the cell inner membrane. The sequence is that of UPF0283 membrane protein mlr0776 from Mesorhizobium japonicum (strain LMG 29417 / CECT 9101 / MAFF 303099) (Mesorhizobium loti (strain MAFF 303099)).